Consider the following 40-residue polypeptide: Dolichyl-diphosphooligosaccharide--protein glycosyltransferase subunit 4 (40 aa).

The Lumenal portion of the chain corresponds to 1-7 (MITDMQL). The chain crosses the membrane as a helical span at residues 8–28 (AIFSNVLGVFLFLLVVAYHYI). The Cytoplasmic portion of the chain corresponds to 29–40 (NANTGKPSAKAK).

It belongs to the OST4 family. As to quaternary structure, component of the oligosaccharyltransferase (OST) complex.

Its subcellular location is the endoplasmic reticulum membrane. Subunit of the oligosaccharyl transferase (OST) complex that catalyzes the initial transfer of a defined glycan (Glc(3)Man(9)GlcNAc(2) in eukaryotes) from the lipid carrier dolichol-pyrophosphate to an asparagine residue within an Asn-X-Ser/Thr consensus motif in nascent polypeptide chains, the first step in protein N-glycosylation. N-glycosylation occurs cotranslationally and the complex associates with the Sec61 complex at the channel-forming translocon complex that mediates protein translocation across the endoplasmic reticulum (ER). All subunits are required for a maximal enzyme activity. This chain is Dolichyl-diphosphooligosaccharide--protein glycosyltransferase subunit 4, found in Drosophila sechellia (Fruit fly).